Consider the following 590-residue polypeptide: DNA primase (590 aa).

A CHC2-type zinc finger spans residues 37-61 (CPFHKEKTPSFSVSPTKQFYHCFSC). The region spanning 255–337 (GRILVVEGYM…DKSLHFLFLP (83 aa)) is the Toprim domain. Positions 261, 305, and 307 each coordinate Mg(2+).

Belongs to the DnaG primase family. Monomer. Interacts with DnaB. It depends on Zn(2+) as a cofactor. Mg(2+) is required as a cofactor.

It carries out the reaction ssDNA + n NTP = ssDNA/pppN(pN)n-1 hybrid + (n-1) diphosphate.. Its function is as follows. RNA polymerase that catalyzes the synthesis of short RNA molecules used as primers for DNA polymerase during DNA replication. The protein is DNA primase of Neisseria meningitidis serogroup A / serotype 4A (strain DSM 15465 / Z2491).